A 220-amino-acid chain; its full sequence is Inner membrane-spanning protein YciB (220 aa).

6 consecutive transmembrane segments (helical) span residues 20 to 40, 57 to 77, 86 to 106, 123 to 143, 156 to 176, and 187 to 207; these read EVPP…FFFA, IGAP…IALA, LPIM…LTLW, LFGG…GYVF, KLTL…EIVW, and FKVW…MPLI.

The protein belongs to the YciB family.

The protein resides in the cell inner membrane. Plays a role in cell envelope biogenesis, maintenance of cell envelope integrity and membrane homeostasis. This chain is Inner membrane-spanning protein YciB, found in Brucella melitensis biotype 2 (strain ATCC 23457).